A 287-amino-acid chain; its full sequence is Chlorophyll a-b binding protein CP29.2, chloroplastic (287 aa).

A chloroplast-targeting transit peptide spans 1 to 31; it reads MAATSTAAAASSIMGTRVVSDISSNSSRFTA. Residue Arg32 is modified to N2-acetylarginine. A Phosphothreonine modification is found at Thr37. Trp55 is a binding site for chlorophyll b. Residue Phe75 coordinates chlorophyll a. 2 positions are modified to phosphothreonine: Thr109 and Thr111. Residues Glu137 and His140 each contribute to the chlorophyll a site. The chain crosses the membrane as a helical span at residues 143 to 163; it reads WAMLATLGAITVEWLTGVTWQ. Position 177 (Leu177) interacts with chlorophyll a. Residues 181–201 form a helical membrane-spanning segment; that stretch reads LPFSISTLIWIEVLVIGYIEF. Glu200 and Arg203 together coordinate chlorophyll b. The chlorophyll a site is built by Glu239, His242, Arg244, Gln256, and His271. A helical transmembrane segment spans residues 245–265; sequence LAMVGFLGFAVQAAATGKGPL.

Belongs to the light-harvesting chlorophyll a/b-binding (LHC) protein family. As to quaternary structure, the LHC complex consists of chlorophyll a-b binding proteins. The cofactor is Binds at least 14 chlorophylls (8 Chl-a and 6 Chl-b) and carotenoids such as lutein and neoxanthin.. Photoregulated by reversible phosphorylation of its threonine residues.

It localises to the plastid. It is found in the chloroplast thylakoid membrane. The light-harvesting complex (LHC) functions as a light receptor, it captures and delivers excitation energy to photosystems with which it is closely associated. In Arabidopsis thaliana (Mouse-ear cress), this protein is Chlorophyll a-b binding protein CP29.2, chloroplastic (LHCB4.2).